Consider the following 1689-residue polypeptide: MVGELRYREFRVPLGPGLHAYPDELIRQRVGHNGHPEYQIRWLILRRGDDGDRDSTVDCKAEHILLWMSDDEIYANCHKMLGENGQVIAPSRESTEAGALDKSVLGEMETDVKSLIQRALRQLEECVGTVPPAPLLHTVHVLSAYASIEPLTGIFKDRRVVNLLMHMLSSPDYQIRWSAGRMIQALSSHDAGTRTQILLSLSQQEAIEKHLDFDSRCALLALFAQATLTEHPMSFEGVQLPQVPGRLLFSLVKRYLHVTFLLDRLNGDAGDQGAQNNFIPEELNVGRGRLELEFSMAMGTLISELVQAMRWDGASSRPESSSSSTFQPRPAQFRPYTQRFRRSRRFRPRASFASFNTYALYVRDTLRPGMRVRMLENYEEIAAGDEGQFRQSNDGVPPAQVLWDSTGHTYWVHWHMLEILGFEEDIEDVIDIEELQELGANGALSIVPPSQRWKPITQLFAEPYVVPEEEDREESENLTQAEWWELLFFIRQLSEAERLHIVDLLQDHLEEERVLDYDMLPELTVPVDLAQDLLLSLPQQLEDSALRDLFSCSVYRKYGPEVLVGHLSYPFVPGAQPNLFGANEESEAKDPPLQSASPALQRLVESLGPEGEVLVELEQALGSEAPQETEVKSCLLQLQEQPQPFLALMRSLDTSASNKTLHLTVLRILMQLVNFPEALLLPWHEAMDACVTCLRSPNTDREVLQELIFFLHRLTTTSRDYAVILNQLGARDAISKVLEKHRGKLELAQELRDMVSKCEKHAHLYRKLTTNILGGCIQMVLGQIEDHRRTHRPIQIPFFDVFLRYLCQGSSEEMKKNRYWEKVEVSSNPQRASRLTDRNPKTYWESSGRAGSHFITLHMRPGVIIRQLTLLVAGEDSSYMPAWVVVCGGNSIKSVNKELNTVNVMPSASRVTLLENLTRFWPIIQIRIKRCQQGGINTRIRGLEVLGPKPTFWPVFREQLCRHTRLFYMVRAQAWSQDIAEDRRSLLHLSSRLNGALRHEQNFAERFLPDMEAAQALSKTCWEALVSPLVQNITSPDEDSTSSLGWLLDQYLGCREAAYNPQSRAAAFSSRVRRLTHLLVHVEPREAAPPVVAIPRSKGRNRIHDWSYLITRGLPSSIMKNLTRCWRSVVEEQMNKFLTASWKDDDFVPRYCERYYVLQKSSSELFGPRAAFLLAMRNGCADAVLRLPFLRAAHVSEQFARHIDQRIQGSRMGGARGMEMLAQLQRCLESVLIFSPLEIATTFEHYYQHYMADRLLSVGSSWLEGAVLEQIGPCFPSRLPQQMLQSLNVSEELQRQFHVYQLQQLDQELLKLEDTEKKIQVAHEDSGREDKSKKEEAIGEAAAVAMAEEEDQGKKEEGEEEGEGEDEEEERYYKGTMPEVCVLVVTPRFWPVASVCQMLNPATCLPAYLRGTINHYTNFYSKSQSRSSLEKEPQRRLQWTWQGRAEVQFGGQILHVSTVQMWLLLHLNNQKEVSVESLQAISELPPDVLHRAIGPLTSSRGPLDLQEQKNVPGGVLKIRDDSEEPRPRRGNVWLIPPQTYLQAEAEEGRNMEKRRNLLNCLVVRILKAHGDEGLHVDRLVYLVLEAWEKGPCPARGLVSSLGRGATCRSSDVLSCILHLLVKGTLRRHDDRPQVLYYAVPVTVMEPHMESLNPGSAGPNPPLTFHTLQIRSRGVPYASCTDNHTFSTFR.

A CPH domain is found at 349-422 (RASFASFNTY…HWHMLEILGF (74 aa)). Residues 793–972 (PIQIPFFDVF…HTRLFYMVRA (180 aa)) enclose the DOC domain. Residues 1321–1337 (VAHEDSGREDKSKKEEA) show a composition bias toward basic and acidic residues. The disordered stretch occupies residues 1321 to 1371 (VAHEDSGREDKSKKEEAIGEAAAVAMAEEEDQGKKEEGEEEGEGEDEEEER). Acidic residues predominate over residues 1358 to 1370 (GEEEGEGEDEEEE). Residue Lys1567 forms a Glycyl lysine isopeptide (Lys-Gly) (interchain with G-Cter in NEDD8) linkage.

It belongs to the cullin family. In terms of assembly, component of the 3M complex, composed of core components CUL7, CCDC8 and OBSL1. Component of the Cul7-RING(FBXW8) complex consisting of CUL7, RBX1, SKP1 and FBXW8. Within the Cul7-RING(FBXW8) complex interacts with FBXW8 and RBX1, but not with SKP1. Interacts with CUL1 (via the C-terminal domain); the interaction seems to be mediated by FBXW8; it is likely specific to FBXW8, but not other F-box proteins. Interacts (via the CPH domain) with p53/TP53; the interaction preferentially involves tetrameric and dimeric p53/TP53; this interaction recruits p53/TP53 for ubiquitination by neddylated CUL1-RBX1. The CUL7-CUL9 heterodimer seems to interact specifically with p53/TP53. Interacts with FBXW8; interaction is mutually exclusive of binding to CUL9 or p53/TP53. Interacts with CUL9; leading to inhibited CUL9 activity. Interacts with OBSL1. Interacts (as part of the 3M complex) with HDAC4 and HDAC5; it is negatively regulated by ANKRA2.

It localises to the cytoplasm. The protein localises to the cytoskeleton. It is found in the microtubule organizing center. The protein resides in the centrosome. Its subcellular location is the perinuclear region. It localises to the golgi apparatus. It participates in protein modification; protein ubiquitination. Functionally, core component of the 3M and Cul7-RING(FBXW8) complexes, which mediate the ubiquitination and subsequent proteasomal degradation of target proteins. Core component of the 3M complex, a complex required to regulate microtubule dynamics and genome integrity. It is unclear how the 3M complex regulates microtubules, it could act by controlling the level of a microtubule stabilizer. The Cul7-RING(FBXW8) complex alone lacks ubiquitination activity and does not promote polyubiquitination and proteasomal degradation of p53/TP53. However it mediates recruitment of p53/TP53 for ubiquitination by neddylated CUL1-RBX1. Interaction with CUL9 is required to inhibit CUL9 activity and ubiquitination of BIRC5. The Cul7-RING(FBXW8) complex also mediates ubiquitination and consequent degradation of target proteins such as GORASP1, IRS1 and MAP4K1/HPK1. Ubiquitination of GORASP1 regulates Golgi morphogenesis and dendrite patterning in brain. Mediates ubiquitination and degradation of IRS1 in a mTOR-dependent manner: the Cul7-RING(FBXW8) complex recognizes and binds IRS1 previously phosphorylated by S6 kinase (RPS6KB1 or RPS6KB2). The Cul7-RING(FBXW8) complex also mediates ubiquitination of MAP4K1/HPK1: recognizes and binds autophosphorylated MAP4K1/HPK1, leading to its degradation, thereby affecting cell proliferation and differentiation. Acts as a regulator in trophoblast cell epithelial-mesenchymal transition and placental development. While the Cul7-RING(FBXW8) and the 3M complexes are associated and involved in common processes, CUL7 and the Cul7-RING(FBXW8) complex may have additional functions. Probably plays a role in the degradation of proteins involved in endothelial proliferation and/or differentiation. The sequence is that of Cullin-7 (Cul7) from Mus musculus (Mouse).